A 140-amino-acid polypeptide reads, in one-letter code: uncharacterized protein (140 aa).

The interval 121–140 (EEVKNGELIDPNVTTEDEKL) is disordered.

This is an uncharacterized protein from Schizosaccharomyces pombe (strain 972 / ATCC 24843) (Fission yeast).